The chain runs to 498 residues: Probable FAD-binding monooxygenase AlmA (498 aa).

The chain crosses the membrane as a helical span at residues His-4–Ser-24. FAD is bound by residues Ser-15, Glu-36, Asp-56, Phe-62, and Val-104. NADP(+) is bound at residue Arg-54–Asp-56. NADP(+)-binding positions include Ser-184–Thr-190, Arg-208–Ser-209, and Arg-292–Leu-293. Val-395 is an FAD binding site.

This sequence belongs to the FAD-binding monooxygenase family. Requires FAD as cofactor.

Its subcellular location is the cell membrane. Its pathway is hydrocarbon metabolism; alkane degradation. Functionally, is able to catalyze the degradation of n-alkanes with C chain lengths of 32 and 36. Probably allows Acinetobacter baylyi strain ADP1 to grow on the long-chain n-alkane dotriacontane (C32H66) as a sole carbon source. This Acinetobacter baylyi (strain ATCC 33305 / BD413 / ADP1) protein is Probable FAD-binding monooxygenase AlmA.